The following is a 770-amino-acid chain: POU domain, class 2, transcription factor 1 (770 aa).

The span at 1-26 (MNNPSETNKSSMESEDASTGTQTNGL) shows a compositional bias: polar residues. Disordered regions lie at residues 1–33 (MNNPSETNKSSMESEDASTGTQTNGLDFQKQPV), 68–97 (LNVQSKSSEESGDSQQSSQPSSQPPSVQSA), 262–285 (VQTLPQSQSTPKRIDTPSLEEPSD), and 357–385 (LSSDSTASSPSALNSPGLGAEGLNRRRKK). Over residues 80 to 97 (DSQQSSQPSSQPPSVQSA) the composition is skewed to low complexity. Positions 262–272 (VQTLPQSQSTP) are enriched in polar residues. 2 positions are modified to phosphothreonine: Thr-271 and Thr-277. Positions 281-355 (EEPSDLEELE…LLEKWLNDAE (75 aa)) constitute a POU-specific domain. Phosphoserine is present on Ser-284. The segment covering 357-372 (LSSDSTASSPSALNSP) has biased composition (low complexity). The segment at residues 382 to 441 (RRKKRTSIETNIRVALEKSFMENQKPTSEDITLIAEQLNMEKEVIRVWFCNRRQKEKRIN) is a DNA-binding region (homeobox). Residues Ser-388 and Ser-451 each carry the phosphoserine modification. Positions 519–580 (TTTAGTTDST…TNTTQTTSTP (62 aa)) are enriched in low complexity. A disordered region spans residues 519–589 (TTTAGTTDST…PLPSPLGASQ (71 aa)).

It belongs to the POU transcription factor family. Class-2 subfamily. In terms of assembly, interacts with POU2AF1; the interaction increases POU2F1 transactivation activity. Interacts with NR3C1, AR, PGR and HCFC1. Post-translationally, phosphorylated by PRKDC. In terms of tissue distribution, ubiquitously expressed. However, isoforms 4 and 5 are only expressed in lymphocytes.

The protein resides in the nucleus. Transcription factor that binds to the octamer motif (5'-ATTTGCAT-3') and activates the promoters of the genes for some small nuclear RNAs (snRNA) and of genes such as those for histone H2B and immunoglobulins. Modulates transcription transactivation by NR3C1, AR and PGR. This Mus musculus (Mouse) protein is POU domain, class 2, transcription factor 1 (Pou2f1).